A 391-amino-acid chain; its full sequence is BRCA1-A complex subunit Abraxas 1 (391 aa).

In terms of domain architecture, MPN spans 8–156 (VRISGFVLSS…THRLEFSAFI (149 aa)). A coiled-coil region spans residues 223-261 (LLAEMQKVCVEVEKSERTVEKLQEDIAQLKEAIGKQKTH). The segment at 354–391 (QRLKRKRKTREVSESASESGSDTEIEMNGQSGSNSPVF) is disordered. Over residues 367-391 (ESASESGSDTEIEMNGQSGSNSPVF) the composition is skewed to polar residues. Residue Ser388 is modified to Phosphoserine. The pSXXF motif signature appears at 388-391 (SPVF).

It belongs to the FAM175 family. Abraxas subfamily. In terms of assembly, component of the ARISC complex. Component of the BRCA1-A complex. Homodimer. In terms of processing, phosphorylation of Ser-388 of the pSXXF motif by ATM or ATR constitutes a specific recognition motif for the BRCT domain of BRCA1.

The protein localises to the nucleus. Functionally, involved in DNA damage response and double-strand break (DSB) repair. Component of the BRCA1-A complex, acting as a central scaffold protein that assembles the various components of the complex. The BRCA1-A complex specifically recognizes 'Lys-63'-linked ubiquitinated histones H2A and H2AX at DNA lesion sites. This complex also possesses deubiquitinase activity that specifically removes 'Lys-63'-linked ubiquitin on histones H2A and H2AX. This is BRCA1-A complex subunit Abraxas 1 from Danio rerio (Zebrafish).